We begin with the raw amino-acid sequence, 273 residues long: ATP synthase subunit a (273 aa).

Transmembrane regions (helical) follow at residues 41-61, 101-121, 122-142, 143-163, 183-203, 221-241, and 247-267; these read ILNI…LLIF, LIAP…LMDL, LAVD…ALRV, VPSA…ILII, PFNH…SLLS, LVFI…ISVP, and IIVI…YIAM.

Belongs to the ATPase A chain family. F-type ATPases have 2 components, CF(1) - the catalytic core - and CF(0) - the membrane proton channel. CF(1) has five subunits: alpha(3), beta(3), gamma(1), delta(1), epsilon(1). CF(0) has three main subunits: a(1), b(2) and c(9-12). The alpha and beta chains form an alternating ring which encloses part of the gamma chain. CF(1) is attached to CF(0) by a central stalk formed by the gamma and epsilon chains, while a peripheral stalk is formed by the delta and b chains.

The protein localises to the cell membrane. Key component of the proton channel; it plays a direct role in the translocation of protons across the membrane. This Baumannia cicadellinicola subsp. Homalodisca coagulata protein is ATP synthase subunit a.